The sequence spans 135 residues: FK506-binding protein 2 (135 aa).

The first 20 residues, 1–20, serve as a signal peptide directing secretion; that stretch reads MRVPIITTLLTLALTGLSQA. A PPIase FKBP-type domain is found at 40 to 128; sequence GDTVKMHYRG…IFQTELLEIE (89 aa). Residues 132–135 carry the Prevents secretion from ER motif; that stretch reads KDEL.

This sequence belongs to the FKBP-type PPIase family. FKBP2 subfamily.

The protein localises to the endoplasmic reticulum. The catalysed reaction is [protein]-peptidylproline (omega=180) = [protein]-peptidylproline (omega=0). With respect to regulation, inhibited by both FK506 and rapamycin. In terms of biological role, PPIases accelerate the folding of proteins. It catalyzes the cis-trans isomerization of proline imidic peptide bonds in oligopeptides. This is FK506-binding protein 2 (fkbB) from Emericella nidulans (strain FGSC A4 / ATCC 38163 / CBS 112.46 / NRRL 194 / M139) (Aspergillus nidulans).